A 470-amino-acid chain; its full sequence is uncharacterized protein (470 aa).

A coiled-coil region spans residues 418 to 453 (SECCEEQEEKEKKKEKEKEKKKEKDDDDDQQNNNNN). Residues 423 to 470 (EQEEKEKKKEKEKEKKKEKDDDDDQQNNNNNDQNGLGLGLGLNFGLNL) form a disordered region. Over residues 426–441 (EKEKKKEKEKEKKKEK) the composition is skewed to basic and acidic residues. Positions 448 to 457 (QNNNNNDQNG) are enriched in low complexity.

This is an uncharacterized protein from Acidianus bottle-shaped virus (isolate Italy/Pozzuoli) (ABV).